The sequence spans 515 residues: Zinc metalloproteinase-disintegrin-like EoMP06 (515 aa).

Residues 1 to 94 (VEDHCYYHGR…TLGLIVPPHG (94 aa)) constitute a propeptide that is removed on maturation. Glutamine 95 carries the post-translational modification Pyrrolidone carboxylic acid. Residues 100-296 (KFIELIIVVD…YNPKCIVDPP (197 aa)) enclose the Peptidase M12B domain. Ca(2+) is bound at residue glutamate 103. An N-linked (GlcNAc...) asparagine glycan is attached at asparagine 160. Residue aspartate 187 participates in Ca(2+) binding. N-linked (GlcNAc...) asparagine glycosylation is found at asparagine 194 and asparagine 225. 3 disulfide bridges follow: cysteine 211/cysteine 291, cysteine 251/cysteine 275, and cysteine 253/cysteine 258. A Zn(2+)-binding site is contributed by histidine 236. Glutamate 237 is an active-site residue. Zn(2+) contacts are provided by histidine 240 and histidine 246. Residues cysteine 291, valine 306, asparagine 309, valine 311, glutamate 313, glutamate 316, and aspartate 319 each coordinate Ca(2+). Residues 304-390 (PAVCGNGVWE…ECPRNEFQRN (87 aa)) enclose the Disintegrin domain. 14 disulfides stabilise this stretch: cysteine 307-cysteine 336, cysteine 318-cysteine 331, cysteine 320-cysteine 326, cysteine 330-cysteine 353, cysteine 344-cysteine 350, cysteine 349-cysteine 375, cysteine 362-cysteine 382, cysteine 369-cysteine 401, cysteine 394-cysteine 406, cysteine 413-cysteine 466, cysteine 428-cysteine 477, cysteine 441-cysteine 454, cysteine 461-cysteine 503, and cysteine 497-cysteine 508. The short motif at 368-370 (DCD) is the D/ECD-tripeptide element. Ca(2+) is bound by residues aspartate 370, valine 371, and asparagine 385.

The protein belongs to the venom metalloproteinase (M12B) family. P-III subfamily. P-IIIa sub-subfamily. In terms of assembly, monomer. It depends on Zn(2+) as a cofactor. In terms of tissue distribution, expressed by the venom gland.

It is found in the secreted. In terms of biological role, snake venom zinc metalloproteinase that catalyzes the conversion of prothrombin (F2) to alpha-thrombin through formation of a thrombin intermediate, thereby functioning as a procoagulant protein. The protein is Zinc metalloproteinase-disintegrin-like EoMP06 of Echis ocellatus (Ocellated saw-scaled viper).